Consider the following 317-residue polypeptide: Urease accessory protein 6 (317 aa).

The protein belongs to the UreF family. In terms of assembly, URE4, URE6 and URE7 may form a complex that acts as a GTP-hydrolysis-dependent molecular chaperone, activating the urease apoprotein URE1.

Functionally, urease accessory protein required for the maturation and activation of urease via the functional incorporation of the urease nickel metallocenter. Plays a role in host brain invasion. This Cryptococcus neoformans var. grubii serotype A (strain H99 / ATCC 208821 / CBS 10515 / FGSC 9487) (Filobasidiella neoformans var. grubii) protein is Urease accessory protein 6.